Reading from the N-terminus, the 208-residue chain is Uracil phosphoribosyltransferase (208 aa).

5-phospho-alpha-D-ribose 1-diphosphate-binding positions include Arg78, Arg103, and 130 to 138; that span reads DPMLATGGS. Uracil is bound by residues Ile193 and 198–200; that span reads GDA. Asp199 provides a ligand contact to 5-phospho-alpha-D-ribose 1-diphosphate.

This sequence belongs to the UPRTase family. Requires Mg(2+) as cofactor.

The enzyme catalyses UMP + diphosphate = 5-phospho-alpha-D-ribose 1-diphosphate + uracil. It functions in the pathway pyrimidine metabolism; UMP biosynthesis via salvage pathway; UMP from uracil: step 1/1. With respect to regulation, allosterically activated by GTP. Catalyzes the conversion of uracil and 5-phospho-alpha-D-ribose 1-diphosphate (PRPP) to UMP and diphosphate. This is Uracil phosphoribosyltransferase from Sodalis glossinidius (strain morsitans).